A 348-amino-acid chain; its full sequence is Fe(3+) ions import ATP-binding protein FbpC (348 aa).

The region spanning Val7–Met237 is the ABC transporter domain. Gly39 to Thr46 provides a ligand contact to ATP.

Belongs to the ABC transporter superfamily. Fe(3+) ion importer (TC 3.A.1.10) family. The complex is composed of two ATP-binding proteins (FbpC), two transmembrane proteins (FbpB) and a solute-binding protein (FbpA).

The protein resides in the cell inner membrane. It carries out the reaction Fe(3+)(out) + ATP + H2O = Fe(3+)(in) + ADP + phosphate + H(+). Its function is as follows. Part of the ABC transporter complex FbpABC involved in Fe(3+) ions import. Responsible for energy coupling to the transport system. This chain is Fe(3+) ions import ATP-binding protein FbpC, found in Escherichia coli (strain K12).